The chain runs to 268 residues: Tryptophan synthase alpha chain (268 aa).

Residues Glu49 and Asp60 each act as proton acceptor in the active site.

This sequence belongs to the TrpA family. In terms of assembly, tetramer of two alpha and two beta chains.

The enzyme catalyses (1S,2R)-1-C-(indol-3-yl)glycerol 3-phosphate + L-serine = D-glyceraldehyde 3-phosphate + L-tryptophan + H2O. The protein operates within amino-acid biosynthesis; L-tryptophan biosynthesis; L-tryptophan from chorismate: step 5/5. Its function is as follows. The alpha subunit is responsible for the aldol cleavage of indoleglycerol phosphate to indole and glyceraldehyde 3-phosphate. The sequence is that of Tryptophan synthase alpha chain from Yersinia enterocolitica serotype O:8 / biotype 1B (strain NCTC 13174 / 8081).